The following is a 327-amino-acid chain: Aliphatic sulfonates import ATP-binding protein SsuB (327 aa).

Positions 21–54 (ELAQPRIADGDAQDAAVYERDGGAHAPPDGDRAD) are disordered. The span at 37–54 (VYERDGGAHAPPDGDRAD) shows a compositional bias: basic and acidic residues. Positions 66 to 285 (VRLTRVSKRY…ARASAAFAAL (220 aa)) constitute an ABC transporter domain. 98 to 105 (GRSGCGKS) is a binding site for ATP. The disordered stretch occupies residues 300–327 (APAAPNAAGPEGASRGRAAPASGLRWAV).

This sequence belongs to the ABC transporter superfamily. Aliphatic sulfonates importer (TC 3.A.1.17.2) family. As to quaternary structure, the complex is composed of two ATP-binding proteins (SsuB), two transmembrane proteins (SsuC) and a solute-binding protein (SsuA).

The protein resides in the cell inner membrane. The catalysed reaction is ATP + H2O + aliphatic sulfonate-[sulfonate-binding protein]Side 1 = ADP + phosphate + aliphatic sulfonateSide 2 + [sulfonate-binding protein]Side 1.. Its function is as follows. Part of the ABC transporter complex SsuABC involved in aliphatic sulfonates import. Responsible for energy coupling to the transport system. The protein is Aliphatic sulfonates import ATP-binding protein SsuB of Burkholderia pseudomallei (strain K96243).